Here is a 93-residue protein sequence, read N- to C-terminus: CRISPR-associated endoribonuclease Cas2 3 (93 aa).

Residue Asp-10 coordinates Mg(2+).

The protein belongs to the CRISPR-associated endoribonuclease Cas2 protein family. As to quaternary structure, homodimer, forms a heterotetramer with a Cas1 homodimer. The cofactor is Mg(2+).

Functionally, CRISPR (clustered regularly interspaced short palindromic repeat), is an adaptive immune system that provides protection against mobile genetic elements (viruses, transposable elements and conjugative plasmids). CRISPR clusters contain sequences complementary to antecedent mobile elements and target invading nucleic acids. CRISPR clusters are transcribed and processed into CRISPR RNA (crRNA). Functions as a ssRNA-specific endoribonuclease. Involved in the integration of spacer DNA into the CRISPR cassette. The sequence is that of CRISPR-associated endoribonuclease Cas2 3 from Chloroflexus aurantiacus (strain ATCC 29366 / DSM 635 / J-10-fl).